Here is a 436-residue protein sequence, read N- to C-terminus: Trigger factor (436 aa).

Positions G163–P248 constitute a PPIase FKBP-type domain.

It belongs to the FKBP-type PPIase family. Tig subfamily.

The protein resides in the cytoplasm. It catalyses the reaction [protein]-peptidylproline (omega=180) = [protein]-peptidylproline (omega=0). Involved in protein export. Acts as a chaperone by maintaining the newly synthesized protein in an open conformation. Functions as a peptidyl-prolyl cis-trans isomerase. The polypeptide is Trigger factor (Polaromonas sp. (strain JS666 / ATCC BAA-500)).